The following is a 196-amino-acid chain: MEIKLNKYIDHTLLKPEATKQDIINLCNQAIQYDFATVCVNTCWTSLCKELLKNSNVGITNVVGFPLGACLTEVKVFETKKAIENGCDEIDMVLNIGALKDKDYDLVLNDMKEVKKAANEHVVKVILENCLLTKQEIIKACELAVQAGLEFVKTSTGFNKSGANVKDVKLMSEVVKTKLKLKLLVELELMMMQSQW.

Aspartate 91 functions as the Proton donor/acceptor in the catalytic mechanism. Lysine 153 serves as the catalytic Schiff-base intermediate with acetaldehyde. The active-site Proton donor/acceptor is lysine 182.

Belongs to the DeoC/FbaB aldolase family. DeoC type 1 subfamily.

It localises to the cytoplasm. It catalyses the reaction 2-deoxy-D-ribose 5-phosphate = D-glyceraldehyde 3-phosphate + acetaldehyde. Its pathway is carbohydrate degradation; 2-deoxy-D-ribose 1-phosphate degradation; D-glyceraldehyde 3-phosphate and acetaldehyde from 2-deoxy-alpha-D-ribose 1-phosphate: step 2/2. Catalyzes a reversible aldol reaction between acetaldehyde and D-glyceraldehyde 3-phosphate to generate 2-deoxy-D-ribose 5-phosphate. The sequence is that of Deoxyribose-phosphate aldolase from Mycoplasma mycoides subsp. mycoides SC (strain CCUG 32753 / NCTC 10114 / PG1).